Consider the following 476-residue polypeptide: Aspartyl/glutamyl-tRNA(Asn/Gln) amidotransferase subunit B (476 aa).

Belongs to the GatB/GatE family. GatB subfamily. In terms of assembly, heterotrimer of A, B and C subunits.

The catalysed reaction is L-glutamyl-tRNA(Gln) + L-glutamine + ATP + H2O = L-glutaminyl-tRNA(Gln) + L-glutamate + ADP + phosphate + H(+). It catalyses the reaction L-aspartyl-tRNA(Asn) + L-glutamine + ATP + H2O = L-asparaginyl-tRNA(Asn) + L-glutamate + ADP + phosphate + 2 H(+). In terms of biological role, allows the formation of correctly charged Asn-tRNA(Asn) or Gln-tRNA(Gln) through the transamidation of misacylated Asp-tRNA(Asn) or Glu-tRNA(Gln) in organisms which lack either or both of asparaginyl-tRNA or glutaminyl-tRNA synthetases. The reaction takes place in the presence of glutamine and ATP through an activated phospho-Asp-tRNA(Asn) or phospho-Glu-tRNA(Gln). The protein is Aspartyl/glutamyl-tRNA(Asn/Gln) amidotransferase subunit B of Variovorax paradoxus (strain S110).